The chain runs to 506 residues: Maturase K (506 aa).

It belongs to the intron maturase 2 family. MatK subfamily.

It is found in the plastid. The protein resides in the chloroplast. Functionally, usually encoded in the trnK tRNA gene intron. Probably assists in splicing its own and other chloroplast group II introns. The polypeptide is Maturase K (Empetrum nigrum (Black crowberry)).